The primary structure comprises 279 residues: Topoisomerase I damage affected protein 4 (279 aa).

Residues 1-32 (MNANSTTTAIGLTSPFEKLSFFPHSSNLILAH) are Extracellular-facing. Residues 33–53 (LHEIIFSFVFYQLAFSVVAPF) traverse the membrane as a helical segment. Residues 54 to 79 (LNKVVFRKHYTTIRDPLLKIDFNVHT) lie on the Cytoplasmic side of the membrane. The region spanning 70-271 (LLKIDFNVHT…MIRIAKKLAK (202 aa)) is the TLC domain. The helical transmembrane segment at 80–100 (VSMIQAVVSNTVLLPTLTTPM) threads the bilayer. Over 101 to 110 (HYNVVTYTDS) the chain is Extracellular. The helical transmembrane segment at 111-131 (YSSMVSSLSAGYFIWDLTMCV) threads the bilayer. The Cytoplasmic portion of the chain corresponds to 132–135 (RYFK). A helical transmembrane segment spans residues 136–156 (LYGLEFTGHAIGSVYVMLLSL). Residues 157 to 162 (RPFCQP) are Extracellular-facing. Residues 163 to 183 (WIGRFLIYEASTPFVNINWFI) form a helical membrane-spanning segment. The Cytoplasmic portion of the chain corresponds to 184 to 192 (MQCNAKSKN). Residues 193-213 (SIPLWFNVVNGLLLMTVFFVV) traverse the membrane as a helical segment. Residues 214–238 (RICWGSIASALLFRQMWKVRDELPK) lie on the Extracellular side of the membrane. Residues 239-259 (FSAVTMMSLNIFMNLLNVLWF) form a helical membrane-spanning segment. Residues 260 to 279 (KKMIRIAKKLAKPAPTSKLD) are Cytoplasmic-facing.

Belongs to the TMEM56 family.

The protein resides in the membrane. This is Topoisomerase I damage affected protein 4 (TDA4) from Saccharomyces cerevisiae (strain ATCC 204508 / S288c) (Baker's yeast).